The following is a 37-amino-acid chain: Cytochrome b6-f complex subunit 5 (37 aa).

A helical transmembrane segment spans residues 5 to 25 (ILLGIVLGMVLVTLAGLFVAA).

This sequence belongs to the PetG family. The 4 large subunits of the cytochrome b6-f complex are cytochrome b6, subunit IV (17 kDa polypeptide, PetD), cytochrome f and the Rieske protein, while the 4 small subunits are PetG, PetL, PetM and PetN. The complex functions as a dimer.

It is found in the cellular thylakoid membrane. Functionally, component of the cytochrome b6-f complex, which mediates electron transfer between photosystem II (PSII) and photosystem I (PSI), cyclic electron flow around PSI, and state transitions. PetG is required for either the stability or assembly of the cytochrome b6-f complex. The chain is Cytochrome b6-f complex subunit 5 from Synechococcus sp. (strain JA-3-3Ab) (Cyanobacteria bacterium Yellowstone A-Prime).